Reading from the N-terminus, the 153-residue chain is Large ribosomal subunit protein uL22 (153 aa).

Belongs to the universal ribosomal protein uL22 family. In terms of assembly, part of the 50S ribosomal subunit.

Functionally, this protein binds specifically to 23S rRNA. It makes multiple contacts with different domains of the 23S rRNA in the assembled 50S subunit and ribosome. In terms of biological role, the globular domain of the protein is located near the polypeptide exit tunnel on the outside of the subunit, while an extended beta-hairpin is found that lines the wall of the exit tunnel in the center of the 70S ribosome. The chain is Large ribosomal subunit protein uL22 from Methanocella arvoryzae (strain DSM 22066 / NBRC 105507 / MRE50).